We begin with the raw amino-acid sequence, 204 residues long: Holliday junction branch migration complex subunit RuvA (204 aa).

Positions 1–64 (MIGRLQGILL…EDAHLLFGFA (64 aa)) are domain I. Residues 65 to 143 (QKTDRTLFRE…GIKQSDFFVE (79 aa)) are domain II. The interval 144 to 155 (STHIPLSPSIES) is flexible linker. The interval 156–204 (HSESSSDEAISALIALGYKPAEAEKMVKRVAKPELTSEQVIREALKAAL) is domain III.

The protein belongs to the RuvA family. In terms of assembly, homotetramer. Forms an RuvA(8)-RuvB(12)-Holliday junction (HJ) complex. HJ DNA is sandwiched between 2 RuvA tetramers; dsDNA enters through RuvA and exits via RuvB. An RuvB hexamer assembles on each DNA strand where it exits the tetramer. Each RuvB hexamer is contacted by two RuvA subunits (via domain III) on 2 adjacent RuvB subunits; this complex drives branch migration. In the full resolvosome a probable DNA-RuvA(4)-RuvB(12)-RuvC(2) complex forms which resolves the HJ.

The protein resides in the cytoplasm. Functionally, the RuvA-RuvB-RuvC complex processes Holliday junction (HJ) DNA during genetic recombination and DNA repair, while the RuvA-RuvB complex plays an important role in the rescue of blocked DNA replication forks via replication fork reversal (RFR). RuvA specifically binds to HJ cruciform DNA, conferring on it an open structure. The RuvB hexamer acts as an ATP-dependent pump, pulling dsDNA into and through the RuvAB complex. HJ branch migration allows RuvC to scan DNA until it finds its consensus sequence, where it cleaves and resolves the cruciform DNA. This chain is Holliday junction branch migration complex subunit RuvA, found in Haemophilus influenzae (strain 86-028NP).